Reading from the N-terminus, the 101-residue chain is MAKLALIEREKKRARLVAKFAAKREALKAIIEDQSKSEEERYEARLELQQLPRNANPTRQRNRCAITGRPRGTFRKFGLARNKIREIAFRGEIPGLTKASW.

The protein belongs to the universal ribosomal protein uS14 family. As to quaternary structure, part of the 30S ribosomal subunit. Contacts proteins S3 and S10.

In terms of biological role, binds 16S rRNA, required for the assembly of 30S particles and may also be responsible for determining the conformation of the 16S rRNA at the A site. The chain is Small ribosomal subunit protein uS14 from Burkholderia multivorans (strain ATCC 17616 / 249).